Reading from the N-terminus, the 86-residue chain is Small ribosomal subunit protein bS16 (86 aa).

The protein belongs to the bacterial ribosomal protein bS16 family.

This is Small ribosomal subunit protein bS16 from Thermoanaerobacter sp. (strain X514).